The sequence spans 77 residues: UPF0401 protein ECP_3010 (77 aa).

It belongs to the UPF0401 family.

This chain is UPF0401 protein ECP_3010, found in Escherichia coli O6:K15:H31 (strain 536 / UPEC).